We begin with the raw amino-acid sequence, 274 residues long: Orotidine 5'-phosphate decarboxylase (274 aa).

Low complexity predominate over residues 1–15 (MSAGRRSSGGRSAAA). Residues 1-21 (MSAGRRSSGGRSAAAPRFTPP) form a disordered region. Residues Asp32, Lys54, 99 to 108 (DLKLHDIPAT), Thr154, Arg215, Gln224, Gly244, and Arg245 each bind substrate. Residue Lys101 is the Proton donor of the active site.

The protein belongs to the OMP decarboxylase family. Type 1 subfamily. Homodimer.

It catalyses the reaction orotidine 5'-phosphate + H(+) = UMP + CO2. It functions in the pathway pyrimidine metabolism; UMP biosynthesis via de novo pathway; UMP from orotate: step 2/2. Catalyzes the decarboxylation of orotidine 5'-monophosphate (OMP) to uridine 5'-monophosphate (UMP). This chain is Orotidine 5'-phosphate decarboxylase, found in Frankia casuarinae (strain DSM 45818 / CECT 9043 / HFP020203 / CcI3).